A 309-amino-acid chain; its full sequence is Heme A synthase (309 aa).

Topologically, residues 1–6 are cytoplasmic; it reads MTKKLK. The chain crosses the membrane as a helical span at residues 7-27; sequence ILSVISTICMIPLLLGGALVT. Over 28-62 the chain is Extracellular; that stretch reads KTGSADGCGNSWPLCEGQFLPTKISFEMFIELSHR. The cysteines at positions 35 and 42 are disulfide-linked. Residue Glu-58 is part of the active site. His-61 provides a ligand contact to heme o. The chain crosses the membrane as a helical span at residues 63-83; it reads GVTGVVGILIVYLTYLVWKEL. At 84-88 the chain is on the cytoplasmic side; it reads RHNKE. Residues 89-109 traverse the membrane as a helical segment; sequence VVFLAFSALSLMILQALIGAA. At 110 to 123 the chain is on the extracellular side; it reads AVVWGQSDFALATH. Residue His-123 coordinates heme o. The chain crosses the membrane as a helical span at residues 124–144; the sequence is FGISLVCFAAVFLLMLQLFEI. Residues 145–159 are Cytoplasmic-facing; that stretch reads DKKLHTEDIHINKTH. Residues 160–180 traverse the membrane as a helical segment; that stretch reads RIEIYAISFYTMCVVYSGALV. The Extracellular segment spans residues 181–211; it reads RHTDSNLACRDWPLCVNNSSFGISDYNFYQW. A disulfide bridge connects residues Cys-189 and Cys-195. A helical membrane pass occupies residues 212-232; the sequence is VQMGHRLAAGILFIWTVILTI. His-216 provides a ligand contact to heme b. At 233-247 the chain is on the cytoplasmic side; sequence RMVKHYKNSKVFYWS. Residues 248–268 form a helical membrane-spanning segment; it reads WLITLGLITLQVLFGALIIFT. Residues 269-271 lie on the Extracellular side of the membrane; that stretch reads SLN. Residues 272–292 traverse the membrane as a helical segment; it reads LAIALFHALFITCYFGMLSFF. Residue His-278 coordinates heme b. Over 293–309 the chain is Cytoplasmic; the sequence is MHLSFRAKRREKYSNQS.

The protein belongs to the COX15/CtaA family. Type 1 subfamily. Interacts with CtaB. It depends on heme b as a cofactor.

Its subcellular location is the cell membrane. The catalysed reaction is Fe(II)-heme o + 2 A + H2O = Fe(II)-heme a + 2 AH2. The protein operates within porphyrin-containing compound metabolism; heme A biosynthesis; heme A from heme O: step 1/1. Catalyzes the conversion of heme O to heme A by two successive hydroxylations of the methyl group at C8. The first hydroxylation forms heme I, the second hydroxylation results in an unstable dihydroxymethyl group, which spontaneously dehydrates, resulting in the formyl group of heme A. This chain is Heme A synthase, found in Oceanobacillus iheyensis (strain DSM 14371 / CIP 107618 / JCM 11309 / KCTC 3954 / HTE831).